A 243-amino-acid polypeptide reads, in one-letter code: Coproheme decarboxylase (243 aa).

Tyrosine 145 is an active-site residue. Histidine 168 contributes to the Fe-coproporphyrin III binding site.

Belongs to the ChdC family. Type 2 subfamily. Fe-coproporphyrin III is required as a cofactor.

The enzyme catalyses Fe-coproporphyrin III + 2 H2O2 + 2 H(+) = heme b + 2 CO2 + 4 H2O. The catalysed reaction is Fe-coproporphyrin III + H2O2 + H(+) = harderoheme III + CO2 + 2 H2O. It catalyses the reaction harderoheme III + H2O2 + H(+) = heme b + CO2 + 2 H2O. The protein operates within porphyrin-containing compound metabolism; protoheme biosynthesis. Involved in coproporphyrin-dependent heme b biosynthesis. Catalyzes the decarboxylation of Fe-coproporphyrin III (coproheme) to heme b (protoheme IX), the last step of the pathway. The reaction occurs in a stepwise manner with a three-propionate intermediate. The chain is Coproheme decarboxylase from Streptomyces coelicolor (strain ATCC BAA-471 / A3(2) / M145).